A 207-amino-acid chain; its full sequence is CASP-like protein F16 (207 aa).

The tract at residues 1–30 (MEKSEKGNGVAPATRSPMALMGSSRNENQE) is disordered. The Cytoplasmic segment spans residues 1–37 (MEKSEKGNGVAPATRSPMALMGSSRNENQEVNTSMRT). The chain crosses the membrane as a helical span at residues 38-58 (AETMLRLVPMALGVAALVVML). Residues 59 to 79 (KNSQSNDFGSVSYSDLGAFRY) lie on the Extracellular side of the membrane. The helical transmembrane segment at 80–100 (LVHANGICAGYSLLSAIIAAV) threads the bilayer. At 101-108 (PSPSTMPR) the chain is on the cytoplasmic side. A helical transmembrane segment spans residues 109 to 129 (AWTFFLLDQILTYVILGAAAV). Topologically, residues 130–159 (STEVLYLANKGDSAITWSAACGTFAGFCHK) are extracellular. Residues 160-180 (ATIAVVITFVAVICYAVLSLV) form a helical membrane-spanning segment. Topologically, residues 181 to 207 (SSYRLFTKFDAPVNYPSKTIEATVFHG) are cytoplasmic.

Belongs to the Casparian strip membrane proteins (CASP) family. Homodimer and heterodimers.

It is found in the cell membrane. In Gossypium hirsutum (Upland cotton), this protein is CASP-like protein F16 (F16).